A 436-amino-acid chain; its full sequence is Anaerobic glycerol-3-phosphate dehydrogenase subunit B (436 aa).

The protein belongs to the anaerobic G-3-P dehydrogenase subunit B family. As to quaternary structure, composed of a catalytic GlpA/B dimer and of membrane bound GlpC. FMN serves as cofactor.

The enzyme catalyses a quinone + sn-glycerol 3-phosphate = dihydroxyacetone phosphate + a quinol. Its pathway is polyol metabolism; glycerol degradation via glycerol kinase pathway; glycerone phosphate from sn-glycerol 3-phosphate (anaerobic route): step 1/1. Conversion of glycerol 3-phosphate to dihydroxyacetone. Uses fumarate or nitrate as electron acceptor. The polypeptide is Anaerobic glycerol-3-phosphate dehydrogenase subunit B (Vibrio cholerae serotype O1 (strain ATCC 39541 / Classical Ogawa 395 / O395)).